The following is a 1840-amino-acid chain: Neurexin 1 (1840 aa).

The interval Met-1–Ser-50 is disordered. Residues Met-1–Met-1696 are Extracellular-facing. Basic and acidic residues predominate over residues Pro-24–Ala-37. The 186-residue stretch at Gly-104 to Cys-289 folds into the Laminin G-like 1 domain. Positions Thr-309 to Glu-347 constitute an EGF-like 1 domain. 8 disulfides stabilise this stretch: Cys-313/Cys-325, Cys-319/Cys-334, Cys-336/Cys-346, Cys-511/Cys-547, Cys-710/Cys-739, Cys-746/Cys-757, Cys-751/Cys-766, and Cys-768/Cys-778. 2 Laminin G-like domains span residues Pro-352–Cys-547 and Asp-554–Cys-739. The EGF-like 2 domain maps to Gln-742 to Gly-779. Laminin G-like domains lie at Thr-784–Ala-964 and His-982–Cys-1158. Intrachain disulfides connect Cys-1130/Cys-1158, Cys-1164/Cys-1175, Cys-1169/Cys-1184, and Cys-1186/Cys-1196. The EGF-like 3 domain maps to Gly-1160–Tyr-1197. Residues Ile-1201 to Cys-1416 enclose the Laminin G-like 6 domain. The tract at residues Gly-1411–Pro-1651 is disordered. Residues Gln-1447–Thr-1472 are compositionally biased toward low complexity. A compositionally biased stretch (polar residues) spans Thr-1491 to Gln-1527. A compositionally biased stretch (low complexity) spans Gly-1528–Ala-1600. A compositionally biased stretch (basic and acidic residues) spans Arg-1632–Pro-1646. Residues Ile-1697 to Trp-1717 form a helical membrane-spanning segment. Topologically, residues Leu-1718 to Val-1840 are cytoplasmic. Residues Gly-1737–Val-1840 are disordered. Residues Gly-1747–Gln-1757 show a composition bias toward polar residues. Residues Gln-1774–His-1787 are compositionally biased toward low complexity. Residues Asn-1788–Ser-1813 are compositionally biased toward gly residues. Zn(2+) is bound by residues Asp-1831 and Asp-1834. Positions Asp-1831–Val-1840 are enriched in basic and acidic residues. Residues Glu-1837–Val-1840 carry the PDZ domain binding motif.

The protein belongs to the neurexin family. Interacts (via C-terminal PDZ binding motif) with CASK (via PDZ domain). Interacts (via cytoplasmic domain) with apolpp/ApoLI; the interaction supports apolpp/ApoLI protein stability. Interact (via cytoplasmic domain) with Spn/Spinophilin. Interacts with RhoGAP100F/Syd-1 (via PDZ domain); RhoGAP100F/Syd-1 may recruit Nrx-1 to the presynaptic active zone. Expressed in brain, with expression in medulla, lamina, lobula, lobula plate, mushroom body and antennal lobe, and in retina (at protein level). Expressed in rabdomere of photoreceptor cells (at protein level).

It localises to the synaptic cell membrane. The protein resides in the presynaptic cell membrane. Its subcellular location is the postsynaptic cell membrane. Neuronal cell adhesion protein involved in synapse formation, development of synaptic active zones, synaptic regulation and visual function. Plays a role in cell adhesion between the pre- and the postsynaptic cell. Required for proper proliferation of synaptic boutons during larval development, a process necessary for coordinated matching of pre-and postsynaptic compartments. Promotes presynaptic active zone formation and neurotransmitter release. Spn/Spinophilin fine-tunes nrx-1/nlg1 signaling at the pre-synapse to control active zone number and functionality and thereby optimizing action potential-induced exocytosis. Required for synapse formation in central nervous system. By regulating synapse formation, may play a role in larval associative learning. Together with RhoGAP100F/syd-1, controls synapse formation at the neuromuscular junction. Essential for synaptic vesicle cycling, which plays critical roles in neurotransmission at neuromuscular junctions (NMJ). Regulated and restricts formation of glutamate receptor clusters. Mediates retinoid transport and subsequent rhodopsin maturation and may regulate lipoprotein function; thereby playing a role in vision. Regulates sleep, circadian rhythm and synaptic plasticity. Together with CASK, required for locomotion. This Drosophila melanogaster (Fruit fly) protein is Neurexin 1.